Consider the following 519-residue polypeptide: Cytochrome P450 52E1 (519 aa).

2 consecutive transmembrane segments (helical) span residues 10 to 30 (ALGG…FYFI) and 44 to 64 (VIVF…TAML). Cys479 serves as a coordination point for heme.

Belongs to the cytochrome P450 family. Requires heme as cofactor.

Its subcellular location is the membrane. Together with an NADPH cytochrome P450 the enzyme system catalyzes the terminal hydroxylation as the first step in the assimilation of alkanes and fatty acids. The chain is Cytochrome P450 52E1 (CYP52E1) from Candida apicola (Yeast).